The sequence spans 150 residues: UPF0260 protein PputGB1_4117 (150 aa).

Belongs to the UPF0260 family.

The chain is UPF0260 protein PputGB1_4117 from Pseudomonas putida (strain GB-1).